Consider the following 99-residue polypeptide: MATYQVRLINKKEDLDSTIEIDEDTTILEGAAENGIELPFSCHSGSCSSCVGKVVEGEVDQSDQIFLDDEQMSKGFALLCVTYPRSNCTIKTHQEPYLV.

One can recognise a 2Fe-2S ferredoxin-type domain in the interval 4–96 (YQVRLINKKE…NCTIKTHQEP (93 aa)). [2Fe-2S] cluster is bound by residues cysteine 42, cysteine 47, cysteine 50, and cysteine 80.

This sequence belongs to the 2Fe2S plant-type ferredoxin family. It depends on [2Fe-2S] cluster as a cofactor.

In terms of biological role, ferredoxins are iron-sulfur proteins that transfer electrons in a wide variety of metabolic reactions. In Microchaete diplosiphon (Fremyella diplosiphon), this protein is Ferredoxin, heterocyst (fdxH).